The following is a 350-amino-acid chain: Histidinol-phosphate aminotransferase 1 (350 aa).

Lysine 210 carries the N6-(pyridoxal phosphate)lysine modification.

This sequence belongs to the class-II pyridoxal-phosphate-dependent aminotransferase family. Histidinol-phosphate aminotransferase subfamily. In terms of assembly, homodimer. Pyridoxal 5'-phosphate is required as a cofactor.

The enzyme catalyses L-histidinol phosphate + 2-oxoglutarate = 3-(imidazol-4-yl)-2-oxopropyl phosphate + L-glutamate. Its pathway is amino-acid biosynthesis; L-histidine biosynthesis; L-histidine from 5-phospho-alpha-D-ribose 1-diphosphate: step 7/9. The sequence is that of Histidinol-phosphate aminotransferase 1 from Pseudomonas fluorescens (strain Pf0-1).